The following is an 830-amino-acid chain: Protein PAM1 (830 aa).

Residues 379–400 (LQNSESTLKNEIKELQSQVLSL) adopt a coiled-coil conformation. 4 disordered regions span residues 426 to 488 (DNSL…ETSL), 513 to 558 (ALQQ…SQPQ), 648 to 699 (NGMN…NYNI), and 727 to 757 (SRNADSAPCVNQLNSDSPPQLQSLSQNGTSK). The span at 433-444 (PNSNTNGISPSD) shows a compositional bias: polar residues. Residues 481–514 (LSRDETSLKERELEVRMKELELQERELELQRKAL) adopt a coiled-coil conformation. Low complexity-rich tracts occupy residues 513 to 527 (ALQQQQQYQQRPPKQ) and 538 to 555 (SGNNNNKSYNPNRKSSYS). Positions 651–699 (NGTQSRLNSLSNQSTFRSQQGPPITQQKSFQNNGGSMRTNRIPSANYNI) are enriched in polar residues. Residues serine 659 and serine 732 each carry the phosphoserine modification. Over residues 738 to 753 (QLNSDSPPQLQSLSQN) the composition is skewed to low complexity. Serine 767 is subject to Phosphoserine. A compositionally biased stretch (polar residues) spans 796 to 806 (AATANNISTMG). The disordered stretch occupies residues 796-830 (AATANNISTMGDESRKEDVKEKKKKKFSFFGKRKK). Basic and acidic residues predominate over residues 807 to 816 (DESRKEDVKE). Positions 817 to 830 (KKKKKFSFFGKRKK) are enriched in basic residues.

This sequence belongs to the PAM1/SVL3 family.

Its function is as follows. Not known. It is a suppressor of protein phosphatase 2A depletion. The sequence is that of Protein PAM1 (PAM1) from Saccharomyces cerevisiae (strain ATCC 204508 / S288c) (Baker's yeast).